The sequence spans 279 residues: Elongation factor Ts (279 aa).

The interval 80-83 (TDFV) is involved in Mg(2+) ion dislocation from EF-Tu.

The protein belongs to the EF-Ts family.

Its subcellular location is the cytoplasm. Associates with the EF-Tu.GDP complex and induces the exchange of GDP to GTP. It remains bound to the aminoacyl-tRNA.EF-Tu.GTP complex up to the GTP hydrolysis stage on the ribosome. This Borrelia garinii subsp. bavariensis (strain ATCC BAA-2496 / DSM 23469 / PBi) (Borreliella bavariensis) protein is Elongation factor Ts.